The chain runs to 283 residues: Thymidylate synthase (283 aa).

Residue Arg22 participates in dUMP binding. The active-site Nucleophile is Cys160. DUMP-binding positions include 180–183 (RSCD), Asn191, and 221–223 (HIY). Asp183 provides a ligand contact to (6R)-5,10-methylene-5,6,7,8-tetrahydrofolate. Ser282 lines the (6R)-5,10-methylene-5,6,7,8-tetrahydrofolate pocket.

It belongs to the thymidylate synthase family. Bacterial-type ThyA subfamily. As to quaternary structure, homodimer.

It is found in the cytoplasm. It carries out the reaction dUMP + (6R)-5,10-methylene-5,6,7,8-tetrahydrofolate = 7,8-dihydrofolate + dTMP. It participates in pyrimidine metabolism; dTTP biosynthesis. Catalyzes the reductive methylation of 2'-deoxyuridine-5'-monophosphate (dUMP) to 2'-deoxythymidine-5'-monophosphate (dTMP) while utilizing 5,10-methylenetetrahydrofolate (mTHF) as the methyl donor and reductant in the reaction, yielding dihydrofolate (DHF) as a by-product. This enzymatic reaction provides an intracellular de novo source of dTMP, an essential precursor for DNA biosynthesis. The sequence is that of Thymidylate synthase from Shewanella pealeana (strain ATCC 700345 / ANG-SQ1).